Here is a 123-residue protein sequence, read N- to C-terminus: Cholecystokinin A (123 aa).

A signal peptide spans 1–20; it reads MYSGICICLLLAMLSASSKA. Positions 21 to 103 are excised as a propeptide; sequence HQSEDAVVTE…FDQPHRINDR (83 aa). Sulfotyrosine is present on Tyr-105. Residue Phe-111 is modified to Phenylalanine amide. Residues 115-123 constitute a propeptide that is removed on maturation; that stretch reads SAEEYEYSS.

It belongs to the gastrin/cholecystokinin family. The precursor is cleaved by proteases to produce a number of active cholecystokinins. Brain, gastrointestinal tract and lung.

Its subcellular location is the secreted. This is Cholecystokinin A (cck-a) from Xenopus laevis (African clawed frog).